Reading from the N-terminus, the 269-residue chain is Ribonuclease HII (269 aa).

Residues 83-269 (YLIAGVDEVG…HRMSFLTNIL (187 aa)) form the RNase H type-2 domain. A divalent metal cation contacts are provided by Asp-89, Glu-90, and Asp-185.

This sequence belongs to the RNase HII family. Mn(2+) serves as cofactor. The cofactor is Mg(2+).

It is found in the cytoplasm. The catalysed reaction is Endonucleolytic cleavage to 5'-phosphomonoester.. Functionally, endonuclease that specifically degrades the RNA of RNA-DNA hybrids. The chain is Ribonuclease HII from Clostridium botulinum (strain Loch Maree / Type A3).